We begin with the raw amino-acid sequence, 123 residues long: SGSCEVKTCWWSQPDFRVIGDYLKDKYDSASEMVVEKHRESRGWVETLRPKYNFFKAPTEKDLVYYENSPNFCEPNPETGSFGTRDRICNVTSHGIDGCDLLCCGRGHNTRTEKRKEKCHCIF.

Ser1 carries the O-palmitoleoyl serine lipid modification. The cysteines at positions 89 and 104 are disulfide-linked. N-linked (GlcNAc...) asparagine glycosylation occurs at Asn90.

This sequence belongs to the Wnt family. In terms of processing, disulfide bonds have critical and distinct roles in secretion and activity. Loss of each conserved cysteine results in high molecular weight oxidized Wnt oligomers, which are formed through inter-Wnt disulfide bonding. Post-translationally, palmitoleoylation is required for efficient binding to frizzled receptors. Depalmitoleoylation leads to Wnt signaling pathway inhibition.

It localises to the secreted. The protein localises to the extracellular space. Its subcellular location is the extracellular matrix. Functionally, ligand for members of the frizzled family of seven transmembrane receptors. Functions in the canonical Wnt signaling pathway that results in activation of transcription factors of the TCF/LEF family. Required for normal embryonic mesoderm development and formation of caudal somites. Required for normal morphogenesis of the developing neural tube. The sequence is that of Protein Wnt-3a (WNT3A) from Meleagris gallopavo (Wild turkey).